We begin with the raw amino-acid sequence, 128 residues long: Small ribosomal subunit protein uS11 (128 aa).

Belongs to the universal ribosomal protein uS11 family. As to quaternary structure, part of the 30S ribosomal subunit. Interacts with proteins S7 and S18. Binds to IF-3.

Located on the platform of the 30S subunit, it bridges several disparate RNA helices of the 16S rRNA. Forms part of the Shine-Dalgarno cleft in the 70S ribosome. This chain is Small ribosomal subunit protein uS11, found in Ligilactobacillus salivarius (strain UCC118) (Lactobacillus salivarius).